A 421-amino-acid chain; its full sequence is Fusaric acid cluster transcription factor FUB10 (421 aa).

A DNA-binding region (zn(2)-C6 fungal-type) is located at residues 16-47 (CDRCRAQKLRCHRDSGHSTDACLRCLKSGIEC). The segment at 50-92 (SKARPTGRPPSRQVQPTVVVEQGDTSSSSHTTDSSPSAGGTDM) is disordered. The span at 74–86 (TSSSSHTTDSSPS) shows a compositional bias: low complexity.

The protein localises to the nucleus. Transcription factor that regulates the expression of the gene cluster that mediates the biosynthesis of fusaric acid, a mycotoxin with low to moderate toxicity to animals and humans, but with high phytotoxic properties. The chain is Fusaric acid cluster transcription factor FUB10 from Gibberella moniliformis (strain M3125 / FGSC 7600) (Maize ear and stalk rot fungus).